Here is a 296-residue protein sequence, read N- to C-terminus: D-alanine--D-alanine ligase (296 aa).

The ATP-grasp domain maps to 103–293 (KEILMHHRMP…FDSFVKRIIE (191 aa)). 129 to 180 (ISFPVAVKPSSGGSSIATFKVKSIQELKHAYEEASKYGEVMIEQWVTGKEIT) provides a ligand contact to ATP. Residues aspartate 247, glutamate 260, and asparagine 262 each contribute to the Mg(2+) site.

The protein belongs to the D-alanine--D-alanine ligase family. Mg(2+) serves as cofactor. The cofactor is Mn(2+).

The protein localises to the cytoplasm. The catalysed reaction is 2 D-alanine + ATP = D-alanyl-D-alanine + ADP + phosphate + H(+). It functions in the pathway cell wall biogenesis; peptidoglycan biosynthesis. Functionally, cell wall formation. The polypeptide is D-alanine--D-alanine ligase (Francisella tularensis subsp. tularensis (strain FSC 198)).